Consider the following 219-residue polypeptide: Transmembrane protein 17A (219 aa).

N-linked (GlcNAc...) asparagine glycans are attached at residues Asn-18 and Asn-27. 4 consecutive transmembrane segments (helical) span residues 56–76, 83–103, 121–141, and 153–173; these read MMLY…LLML, LPVY…IFEV, LAGF…FFIT, and AVHS…FLAL.

Belongs to the TMEM17 family. As to quaternary structure, part of the tectonic-like complex (also named B9 complex).

It is found in the cell projection. The protein resides in the cilium membrane. In terms of biological role, transmembrane component of the tectonic-like complex, a complex localized at the transition zone of primary cilia and acting as a barrier that prevents diffusion of transmembrane proteins between the cilia and plasma membranes. Required for ciliogenesis and sonic hedgehog/SHH signaling. The chain is Transmembrane protein 17A (tmem17a) from Danio rerio (Zebrafish).